We begin with the raw amino-acid sequence, 204 residues long: Large ribosomal subunit protein uL13 (204 aa).

This sequence belongs to the universal ribosomal protein uL13 family.

The sequence is that of Large ribosomal subunit protein uL13 (RpL13A) from Spodoptera frugiperda (Fall armyworm).